A 506-amino-acid chain; its full sequence is Gamma-aminobutyric acid receptor subunit epsilon (506 aa).

A signal peptide spans 1-22 (MLSKVLPVLLGILLILQSRVEG). The disordered stretch occupies residues 23-66 (PQTESKNEASSRDVVYGPQPQPLENQLLSEETKSTETETGSRVG). At 23 to 280 (PQTESKNEAS…FNVSRRFGYV (258 aa)) the chain is on the extracellular side. N-linked (GlcNAc...) asparagine glycosylation is present at Asn-134. The cysteines at positions 195 and 209 are disulfide-linked. N-linked (GlcNAc...) asparagine glycosylation is present at Asn-252. Residues 281 to 301 (AFQNYVPSSVTTMLSWVSFWI) form a helical membrane-spanning segment. Residues 302–307 (KTESAP) lie on the Cytoplasmic side of the membrane. The chain crosses the membrane as a helical span at residues 308–327 (ARTSLGITSVLTMTTLGTFS). Residues 328-343 (RKNFPRVSYITALDFY) lie on the Extracellular side of the membrane. A helical transmembrane segment spans residues 344–364 (IAICFVFCFCALLEFAVLNFL). Residues 365-485 (IYNQTKAHAS…HVYRLDNYSR (121 aa)) are Cytoplasmic-facing. The tract at residues 413-438 (EGSDGEERPSCSAQQPPSPGSPEGPR) is disordered. Residues 486 to 506 (VVFPVTFFFFNVLYWLVCLNL) traverse the membrane as a helical segment.

This sequence belongs to the ligand-gated ion channel (TC 1.A.9) family. Gamma-aminobutyric acid receptor (TC 1.A.9.5) subfamily. GABRE sub-subfamily. In terms of assembly, heteropentamer, formed by a combination of alpha (GABRA1-6), beta (GABRB1-3), gamma (GABRG1-3), delta (GABRD), epsilon (GABRE), rho (GABRR1-3), pi (GABRP) and theta (GABRQ) chains, each subunit exhibiting distinct physiological and pharmacological properties. Expressed in many tissues. Highest levels of expression in adult heart and placenta.

The protein resides in the cell membrane. It localises to the postsynaptic cell membrane. It carries out the reaction chloride(in) = chloride(out). With respect to regulation, potentiated by pentobarbital, loreclezole, and lanthanum and inhibited by zinc and furosemide. Introduction of the epsilon subunit to the receptor complex resulted in diminished modulatory effects by etomidate, propofol, pregnanolone and flurazepam. Epsilon subunit of the heteropentameric ligand-gated chloride channel gated by gamma-aminobutyric acid (GABA), a major inhibitory neurotransmitter in the brain. GABA-gated chloride channels, also named GABA(A) receptors (GABAAR), consist of five subunits arranged around a central pore and contain GABA active binding site(s) located at the alpha and beta subunit interfaces. When activated by GABA, GABAARs selectively allow the flow of chloride anions across the cell membrane down their electrochemical gradient. GABAARs containing epsilon subunits also permit spontaneous chloride channel activity while preserving the structural information required for GABA-gated openings. GABARs containing epsilon subunit may regulate cardiac function. The protein is Gamma-aminobutyric acid receptor subunit epsilon of Homo sapiens (Human).